The primary structure comprises 168 residues: Secretory-abundant heat soluble protein 33020 (168 aa).

Positions 1-19 (MARFLVALALFGVVAMTAA) are cleaved as a signal peptide. An SAHS-c1 region spans residues 26–57 (EWSGKPWLGKFVAEVSDKSENWEAFVDALGLP). Residues 72–100 (YKQGEHYHHILSLPDKNINKDIEFTLGQE) form an SAHS-c2 region. The tract at residues 113-162 (KYFEDGNKLVADVSIPAKGKSIHDVYDVQGDQLIKSYKVGDVVAKKWFKK) is SAHS-c3.

It belongs to the Secretory-abundant heat soluble protein (SAHS) family.

It localises to the secreted. Its function is as follows. Secreted heat soluble protein acting as a molecular shield in water-deficient condition. Tardigrade-specific intrinsically disordered proteins (TDPs) are essential for desiccation tolerance by forming non-crystalline amorphous solids upon desiccation, and this vitrified state mirrors their protective capabilities. This is Secretory-abundant heat soluble protein 33020 from Hypsibius exemplaris (Freshwater tardigrade).